A 95-amino-acid polypeptide reads, in one-letter code: Protein TusB (95 aa).

Belongs to the DsrH/TusB family. Heterohexamer, formed by a dimer of trimers. The hexameric TusBCD complex contains 2 copies each of TusB, TusC and TusD. The TusBCD complex interacts with TusE.

It is found in the cytoplasm. In terms of biological role, part of a sulfur-relay system required for 2-thiolation of 5-methylaminomethyl-2-thiouridine (mnm(5)s(2)U) at tRNA wobble positions. This Klebsiella pneumoniae subsp. pneumoniae (strain ATCC 700721 / MGH 78578) protein is Protein TusB.